The sequence spans 114 residues: Large ribosomal subunit protein bL19 (114 aa).

It belongs to the bacterial ribosomal protein bL19 family.

Its function is as follows. This protein is located at the 30S-50S ribosomal subunit interface and may play a role in the structure and function of the aminoacyl-tRNA binding site. This Thermobifida fusca (strain YX) protein is Large ribosomal subunit protein bL19.